A 272-amino-acid polypeptide reads, in one-letter code: Energy-coupling factor transporter ATP-binding protein EcfA1 (272 aa).

The region spanning 5 to 239 (IKIDNLKYSY…RKALHENGLE (235 aa)) is the ABC transporter domain. 37–44 (GHNGSGKS) is a binding site for ATP. The active-site Proton acceptor is the Glu-163.

The protein belongs to the ABC transporter superfamily. Energy-coupling factor EcfA family. In terms of assembly, forms a stable energy-coupling factor (ECF) transporter complex probably composed of 2 membrane-embedded substrate-binding proteins (S component), 2 ATP-binding proteins (A component) and 2 transmembrane proteins (T component). This complex interacts with a number of substrate-specific components, including FolT, PanT and RibU for 5-formyltetrahydrofolate, pantothenate and riboflavin respectively.

The protein localises to the cell membrane. Its function is as follows. ATP-binding (A) component of a common energy-coupling factor (ECF) ABC-transporter complex. Unlike classic ABC transporters this ECF transporter provides the energy necessary to transport a number of different substrates including 5-formyltetrahydrofolate, pantothenate and riboflavin. Expression of the complex plus FolT in E.coli allows 5-formyltetrahydrofolate uptake; 5-formyltetrahydrofolate is not taken up in the absence of FolT or the EcfA1A2T complex. The sequence is that of Energy-coupling factor transporter ATP-binding protein EcfA1 from Leuconostoc mesenteroides subsp. mesenteroides (strain ATCC 8293 / DSM 20343 / BCRC 11652 / CCM 1803 / JCM 6124 / NCDO 523 / NBRC 100496 / NCIMB 8023 / NCTC 12954 / NRRL B-1118 / 37Y).